Here is a 402-residue protein sequence, read N- to C-terminus: Nicotinate phosphoribosyltransferase (402 aa).

At His224 the chain carries Phosphohistidine; by autocatalysis.

It belongs to the NAPRTase family. Transiently phosphorylated on a His residue during the reaction cycle. Phosphorylation strongly increases the affinity for substrates and increases the rate of nicotinate D-ribonucleotide production. Dephosphorylation regenerates the low-affinity form of the enzyme, leading to product release.

The catalysed reaction is nicotinate + 5-phospho-alpha-D-ribose 1-diphosphate + ATP + H2O = nicotinate beta-D-ribonucleotide + ADP + phosphate + diphosphate. Its pathway is cofactor biosynthesis; NAD(+) biosynthesis; nicotinate D-ribonucleotide from nicotinate: step 1/1. Its function is as follows. Catalyzes the synthesis of beta-nicotinate D-ribonucleotide from nicotinate and 5-phospho-D-ribose 1-phosphate at the expense of ATP. The sequence is that of Nicotinate phosphoribosyltransferase from Neisseria meningitidis serogroup B (strain ATCC BAA-335 / MC58).